Here is a 520-residue protein sequence, read N- to C-terminus: Ribonuclease Y (520 aa).

A helical transmembrane segment spans residues 4-24 (VSGILLVLIGLLAGVGLGVLL). One can recognise a KH domain in the interval 210–270 (TVSVVNLPNE…VRREVARVSL (61 aa)). Positions 336-429 (VLQHSREVAF…VQAADALSGA (94 aa)) constitute an HD domain.

This sequence belongs to the RNase Y family.

Its subcellular location is the cell membrane. In terms of biological role, endoribonuclease that initiates mRNA decay. The protein is Ribonuclease Y of Syntrophobacter fumaroxidans (strain DSM 10017 / MPOB).